A 274-amino-acid chain; its full sequence is Cell division protein FtsQ (274 aa).

The tract at residues 1 to 24 is disordered; the sequence is MRDLHAKKQRVPHNRVKKPPKERK. Residues 1–33 are Cytoplasmic-facing; the sequence is MRDLHAKKQRVPHNRVKKPPKERKPINWGPILK. Residues 7-21 are compositionally biased toward basic residues; it reads KKQRVPHNRVKKPPK. The helical transmembrane segment at 34-56 threads the bilayer; the sequence is FASRGFGGAALCAGLGFGGWQLY. The Periplasmic portion of the chain corresponds to 57–274; sequence NLVSRTTLLR…YADKIIVKKV (218 aa). A POTRA domain is found at 65-133; sequence LRLEAIEVSP…HTLSITVSER (69 aa).

It belongs to the FtsQ/DivIB family. FtsQ subfamily.

It localises to the cell inner membrane. Functionally, essential cell division protein. In Geobacter sp. (strain M21), this protein is Cell division protein FtsQ.